Here is a 185-residue protein sequence, read N- to C-terminus: Ribosome-recycling factor (185 aa).

Belongs to the RRF family.

The protein localises to the cytoplasm. Its function is as follows. Responsible for the release of ribosomes from messenger RNA at the termination of protein biosynthesis. May increase the efficiency of translation by recycling ribosomes from one round of translation to another. The polypeptide is Ribosome-recycling factor (Clostridium botulinum (strain Eklund 17B / Type B)).